Here is a 159-residue protein sequence, read N- to C-terminus: ATP synthase subunit delta, mitochondrial (159 aa).

The transit peptide at 1–23 directs the protein to the mitochondrion; it reads MFRLSAARTLAKSVNTVVAKRTY.

This sequence belongs to the ATPase epsilon chain family. F-type ATPases have 2 components, CF(1) - the catalytic core - and CF(0) - the membrane proton channel. CF(1) has five subunits: alpha(3), beta(3), gamma(1), delta(1), epsilon(1). CF(0) has three main subunits: a, b and c.

The protein localises to the mitochondrion. It localises to the mitochondrion inner membrane. Mitochondrial membrane ATP synthase (F(1)F(0) ATP synthase or Complex V) produces ATP from ADP in the presence of a proton gradient across the membrane which is generated by electron transport complexes of the respiratory chain. F-type ATPases consist of two structural domains, F(1) - containing the extramembraneous catalytic core, and F(0) - containing the membrane proton channel, linked together by a central stalk and a peripheral stalk. During catalysis, ATP turnover in the catalytic domain of F(1) is coupled via a rotary mechanism of the central stalk subunits to proton translocation. Part of the complex F(1) domain and of the central stalk which is part of the complex rotary element. Rotation of the central stalk against the surrounding alpha(3)beta(3) subunits leads to hydrolysis of ATP in three separate catalytic sites on the beta subunits. The chain is ATP synthase subunit delta, mitochondrial (ATP16) from Kluyveromyces lactis (strain ATCC 8585 / CBS 2359 / DSM 70799 / NBRC 1267 / NRRL Y-1140 / WM37) (Yeast).